A 187-amino-acid chain; its full sequence is Crossover junction endodeoxyribonuclease RuvC (187 aa).

Active-site residues include D7, E67, and D140. Mg(2+) is bound by residues D7, E67, and D140.

Belongs to the RuvC family. As to quaternary structure, homodimer which binds Holliday junction (HJ) DNA. The HJ becomes 2-fold symmetrical on binding to RuvC with unstacked arms; it has a different conformation from HJ DNA in complex with RuvA. In the full resolvosome a probable DNA-RuvA(4)-RuvB(12)-RuvC(2) complex forms which resolves the HJ. Mg(2+) serves as cofactor.

Its subcellular location is the cytoplasm. The catalysed reaction is Endonucleolytic cleavage at a junction such as a reciprocal single-stranded crossover between two homologous DNA duplexes (Holliday junction).. In terms of biological role, the RuvA-RuvB-RuvC complex processes Holliday junction (HJ) DNA during genetic recombination and DNA repair. Endonuclease that resolves HJ intermediates. Cleaves cruciform DNA by making single-stranded nicks across the HJ at symmetrical positions within the homologous arms, yielding a 5'-phosphate and a 3'-hydroxyl group; requires a central core of homology in the junction. The consensus cleavage sequence is 5'-(A/T)TT(C/G)-3'. Cleavage occurs on the 3'-side of the TT dinucleotide at the point of strand exchange. HJ branch migration catalyzed by RuvA-RuvB allows RuvC to scan DNA until it finds its consensus sequence, where it cleaves and resolves the cruciform DNA. The chain is Crossover junction endodeoxyribonuclease RuvC from Chlorobaculum parvum (strain DSM 263 / NCIMB 8327) (Chlorobium vibrioforme subsp. thiosulfatophilum).